The following is a 132-amino-acid chain: Agouti-signaling protein (132 aa).

The first 22 residues, 1–22 (MDVTRLLLATLLVFLCFFTAYS), serve as a signal peptide directing secretion. N-linked (GlcNAc...) asparagine glycosylation occurs at Asn-39. The disordered stretch occupies residues 61–87 (QISRKEAEKKRSSKKEASMKKVARPRT). Residues 63–79 (SRKEAEKKRSSKKEASM) show a composition bias toward basic and acidic residues. Intrachain disulfides connect Cys-93-Cys-108, Cys-100-Cys-114, Cys-107-Cys-125, Cys-111-Cys-132, and Cys-116-Cys-123. Residues 93 to 132 (CVATRDSCKPPAPACCDPCAFCQCRFFRSACSCRVLSLNC) form the Agouti domain.

The protein localises to the secreted. In terms of biological role, involved in the regulation of melanogenesis. The binding of ASP to MC1R precludes alpha-MSH initiated signaling and thus blocks production of cAMP, leading to a down-regulation of eumelanogenesis (brown/black pigment) and thus increasing synthesis of pheomelanin (yellow/red pigment). The chain is Agouti-signaling protein (ASIP) from Macaca hecki (Heck's macaque).